Reading from the N-terminus, the 206-residue chain is Small ribosomal subunit protein uS4 (206 aa).

Positions 96-156 (GRLDNVVYRM…EKSKKQARIK (61 aa)) constitute an S4 RNA-binding domain.

The protein belongs to the universal ribosomal protein uS4 family. As to quaternary structure, part of the 30S ribosomal subunit. Contacts protein S5. The interaction surface between S4 and S5 is involved in control of translational fidelity.

Functionally, one of the primary rRNA binding proteins, it binds directly to 16S rRNA where it nucleates assembly of the body of the 30S subunit. Its function is as follows. With S5 and S12 plays an important role in translational accuracy. This is Small ribosomal subunit protein uS4 from Histophilus somni (strain 2336) (Haemophilus somnus).